Reading from the N-terminus, the 240-residue chain is UDP-2,3-diacylglucosamine hydrolase (240 aa).

Asp-7, His-9, Asp-40, Asn-78, and His-113 together coordinate Mn(2+). Position 78–79 (78–79 (NR)) interacts with substrate. Substrate-binding residues include Asp-121, Ser-159, Thr-163, Lys-166, and His-194. Mn(2+) contacts are provided by His-194 and His-196.

Belongs to the LpxH family. It depends on Mn(2+) as a cofactor.

The protein localises to the cell inner membrane. The enzyme catalyses UDP-2-N,3-O-bis[(3R)-3-hydroxytetradecanoyl]-alpha-D-glucosamine + H2O = 2-N,3-O-bis[(3R)-3-hydroxytetradecanoyl]-alpha-D-glucosaminyl 1-phosphate + UMP + 2 H(+). Its pathway is glycolipid biosynthesis; lipid IV(A) biosynthesis; lipid IV(A) from (3R)-3-hydroxytetradecanoyl-[acyl-carrier-protein] and UDP-N-acetyl-alpha-D-glucosamine: step 4/6. In terms of biological role, hydrolyzes the pyrophosphate bond of UDP-2,3-diacylglucosamine to yield 2,3-diacylglucosamine 1-phosphate (lipid X) and UMP by catalyzing the attack of water at the alpha-P atom. Involved in the biosynthesis of lipid A, a phosphorylated glycolipid that anchors the lipopolysaccharide to the outer membrane of the cell. The protein is UDP-2,3-diacylglucosamine hydrolase of Pseudomonas putida (strain W619).